A 112-amino-acid polypeptide reads, in one-letter code: Lutropin subunit beta (112 aa).

6 disulfides stabilise this stretch: cysteine 4–cysteine 52, cysteine 18–cysteine 67, cysteine 21–cysteine 105, cysteine 29–cysteine 83, cysteine 33–cysteine 85, and cysteine 88–cysteine 95. Residue asparagine 8 is glycosylated (N-linked (GlcNAc...) asparagine).

The protein belongs to the glycoprotein hormones subunit beta family. As to quaternary structure, heterodimer of a common alpha chain and a unique beta chain which confers biological specificity to thyrotropin, lutropin, follitropin and gonadotropin.

The protein resides in the secreted. The chain is Lutropin subunit beta (lhb) from Aquarana catesbeiana (American bullfrog).